The following is a 190-amino-acid chain: 2-phospho-L-lactate guanylyltransferase (190 aa).

Belongs to the CofC family. In terms of assembly, homodimer.

It catalyses the reaction (2S)-2-phospholactate + GTP + H(+) = (2S)-lactyl-2-diphospho-5'-guanosine + diphosphate. Its pathway is cofactor biosynthesis; coenzyme F420 biosynthesis. Guanylyltransferase that catalyzes the activation of (2S)-2-phospholactate (2-PL) as (2S)-lactyl-2-diphospho-5'-guanosine, via the condensation of 2-PL with GTP. It is involved in the biosynthesis of coenzyme F420, a hydride carrier cofactor. The protein is 2-phospho-L-lactate guanylyltransferase of Methanopyrus kandleri (strain AV19 / DSM 6324 / JCM 9639 / NBRC 100938).